The primary structure comprises 325 residues: 4-diphosphocytidyl-2-C-methyl-D-erythritol kinase (325 aa).

Lys-22 is an active-site residue. 110–120 (PVAGGMAGGSA) is a binding site for ATP. Asp-152 is a catalytic residue. Residues 306–325 (PAPGARVLEAVSTPSPGGRS) form a disordered region.

The protein belongs to the GHMP kinase family. IspE subfamily.

The enzyme catalyses 4-CDP-2-C-methyl-D-erythritol + ATP = 4-CDP-2-C-methyl-D-erythritol 2-phosphate + ADP + H(+). It functions in the pathway isoprenoid biosynthesis; isopentenyl diphosphate biosynthesis via DXP pathway; isopentenyl diphosphate from 1-deoxy-D-xylulose 5-phosphate: step 3/6. Its function is as follows. Catalyzes the phosphorylation of the position 2 hydroxy group of 4-diphosphocytidyl-2C-methyl-D-erythritol. The sequence is that of 4-diphosphocytidyl-2-C-methyl-D-erythritol kinase from Kineococcus radiotolerans (strain ATCC BAA-149 / DSM 14245 / SRS30216).